The following is a 362-amino-acid chain: Protein RecA (362 aa).

Residue G77–T84 coordinates ATP.

It belongs to the RecA family.

It localises to the cytoplasm. Its function is as follows. Can catalyze the hydrolysis of ATP in the presence of single-stranded DNA, the ATP-dependent uptake of single-stranded DNA by duplex DNA, and the ATP-dependent hybridization of homologous single-stranded DNAs. It interacts with LexA causing its activation and leading to its autocatalytic cleavage. The polypeptide is Protein RecA (Rhizobium etli (strain ATCC 51251 / DSM 11541 / JCM 21823 / NBRC 15573 / CFN 42)).